Here is a 684-residue protein sequence, read N- to C-terminus: DNA ligase (684 aa).

Residues 34 to 38 (DFQYD), 83 to 84 (SL), and Glu117 contribute to the NAD(+) site. Residue Lys119 is the N6-AMP-lysine intermediate of the active site. NAD(+) contacts are provided by Arg140, Glu186, Lys300, and Lys324. 4 residues coordinate Zn(2+): Cys418, Cys421, Cys436, and Cys442. Positions 601 to 684 (PVNLNFDGMK…EMLGEVGSNE (84 aa)) constitute a BRCT domain.

Belongs to the NAD-dependent DNA ligase family. LigA subfamily. Mg(2+) is required as a cofactor. Mn(2+) serves as cofactor.

It catalyses the reaction NAD(+) + (deoxyribonucleotide)n-3'-hydroxyl + 5'-phospho-(deoxyribonucleotide)m = (deoxyribonucleotide)n+m + AMP + beta-nicotinamide D-nucleotide.. In terms of biological role, DNA ligase that catalyzes the formation of phosphodiester linkages between 5'-phosphoryl and 3'-hydroxyl groups in double-stranded DNA using NAD as a coenzyme and as the energy source for the reaction. It is essential for DNA replication and repair of damaged DNA. This chain is DNA ligase, found in Chlorobium phaeobacteroides (strain BS1).